A 427-amino-acid chain; its full sequence is Serine/arginine (SR)-type shuttling mRNA binding protein GBP2 (427 aa).

The interval 1 to 101 (MERELGMYGN…GRGGGRGRTL (101 aa)) is disordered. The segment covering 22-32 (RLSDDRDRYDD) has biased composition (basic and acidic residues). Serine 24 is modified (phosphoserine). Residues 35-44 (DSSSNNGNGS) are compositionally biased toward low complexity. Basic and acidic residues predominate over residues 50–60 (DRGSRFNDRYD). 2 RRM domains span residues 122-198 (NSIF…QDNP) and 219-296 (FEVF…EGRF). A Phosphothreonine modification is found at threonine 130. Residues 300 to 317 (KNNDRYNQRREDLEDTRG) are compositionally biased toward basic and acidic residues. The tract at residues 300–319 (KNNDRYNQRREDLEDTRGTE) is disordered. The 78-residue stretch at 349 to 426 (CFIYCSNLPF…CSLQISYARR (78 aa)) folds into the RRM 3 domain.

In terms of processing, methylated by HMT1.

It localises to the cytoplasm. Its subcellular location is the nucleus. The protein localises to the chromosome. The protein resides in the telomere. It is found in the P-body. It localises to the stress granule. Binds to intron-containing transcripts and is involved in quality control for the export of spliced mRNAs from the nucleus. Binds to pre-mRNAs until splicing is completed or until faulty mRNAs are degraded. On correctly spliced mRNAs, GBP2 and HRB1 recruit MEX67 to allow nuclear export. On faulty mRNAs, GBP2 and HRB1 associate with the TRAMP complex that guides those pre-mRNAs to the exosome for degradation. Binds single-stranded telomeric sequences of the type (TG[1-3])n in vitro. Influences the localization of RAP1 in the nuclei. Involved in modulating telomere length. The polypeptide is Serine/arginine (SR)-type shuttling mRNA binding protein GBP2 (Saccharomyces cerevisiae (strain ATCC 204508 / S288c) (Baker's yeast)).